We begin with the raw amino-acid sequence, 630 residues long: Tyrosinase (630 aa).

Residues histidine 69, histidine 92, histidine 101, histidine 317, histidine 321, and histidine 360 each coordinate Cu cation. A cross-link (2'-(S-cysteinyl)-histidine (Cys-His)) is located at residues 90–92 (CVH).

This sequence belongs to the tyrosinase family. Requires Cu(2+) as cofactor.

It carries out the reaction 2 L-dopa + O2 = 2 L-dopaquinone + 2 H2O. The catalysed reaction is L-tyrosine + O2 = L-dopaquinone + H2O. Its function is as follows. This is a copper-containing oxidase that functions in the formation of pigments such as melanins and other polyphenolic compounds. The polypeptide is Tyrosinase (tyr1) (Aspergillus fumigatus (strain ATCC MYA-4609 / CBS 101355 / FGSC A1100 / Af293) (Neosartorya fumigata)).